Here is a 193-residue protein sequence, read N- to C-terminus: Holliday junction branch migration complex subunit RuvA (193 aa).

The tract at residues Met1 to Glu63 is domain I. Residues Cys64–Ile148 form a domain II region. The segment at Ala149–Ser150 is flexible linker. The domain III stretch occupies residues Ser150 to Leu193.

This sequence belongs to the RuvA family. In terms of assembly, homotetramer. Forms an RuvA(8)-RuvB(12)-Holliday junction (HJ) complex. HJ DNA is sandwiched between 2 RuvA tetramers; dsDNA enters through RuvA and exits via RuvB. An RuvB hexamer assembles on each DNA strand where it exits the tetramer. Each RuvB hexamer is contacted by two RuvA subunits (via domain III) on 2 adjacent RuvB subunits; this complex drives branch migration. In the full resolvosome a probable DNA-RuvA(4)-RuvB(12)-RuvC(2) complex forms which resolves the HJ.

The protein localises to the cytoplasm. The RuvA-RuvB-RuvC complex processes Holliday junction (HJ) DNA during genetic recombination and DNA repair, while the RuvA-RuvB complex plays an important role in the rescue of blocked DNA replication forks via replication fork reversal (RFR). RuvA specifically binds to HJ cruciform DNA, conferring on it an open structure. The RuvB hexamer acts as an ATP-dependent pump, pulling dsDNA into and through the RuvAB complex. HJ branch migration allows RuvC to scan DNA until it finds its consensus sequence, where it cleaves and resolves the cruciform DNA. The polypeptide is Holliday junction branch migration complex subunit RuvA (Neorickettsia sennetsu (strain ATCC VR-367 / Miyayama) (Ehrlichia sennetsu)).